The sequence spans 3584 residues: D-lysergyl-peptide-synthetase subunit 1 (3584 aa).

The segment at 25 to 44 (IESINGDKNKSERHTASSSA) is disordered. Basic and acidic residues predominate over residues 29-39 (NGDKNKSERHT). The interval 307 to 706 (SCCSRPNSQA…LGRKDDQVKI (400 aa)) is adenylation (A) domain 1. One can recognise a Carrier 1 domain in the interval 848 to 917 (REKLLQALFA…TLREIVIVST (70 aa)). Serine 880 carries the post-translational modification O-(pantetheine 4'-phosphoryl)serine. The condensation (C) domain 1 stretch occupies residues 962-1353 (EDIYPCTHLQ…EHILTQIHSN (392 aa)). The adenylation (A) domain 2 stretch occupies residues 1396-1803 (QAKCQAQPDA…RRKDAQVKIR (408 aa)). The Carrier 2 domain maps to 1948 to 2016 (TEHEISAIWA…TIRKLALARG (69 aa)). The residue at position 1980 (serine 1980) is an O-(pantetheine 4'-phosphoryl)serine. Positions 2066 to 2483 (ERIYPCSPIQ…ALPVLDEDQM (418 aa)) are condensation (C) domain 2. The segment at 2508-2906 (QCIRCPDSPS…GRNDDQVKVR (399 aa)) is adenylation (A) domain 3. The 69-residue stretch at 3041 to 3109 (MEAELQQLVG…RLSDLARIVE (69 aa)) folds into the Carrier 3 domain. O-(pantetheine 4'-phosphoryl)serine is present on serine 3073. The segment at 3174 to 3472 (LYFSKPMASE…VAKSTTWSSD (299 aa)) is cyclization (Cyc) domain.

The protein belongs to the NRP synthetase family.

It participates in alkaloid biosynthesis; ergot alkaloid biosynthesis. In terms of biological role, D-lysergyl-peptide-synthetase subunit 1; part of the gene cluster that mediates the biosynthesis of fungal ergot alkaloid. DmaW catalyzes the first step of ergot alkaloid biosynthesis by condensing dimethylallyl diphosphate (DMAP) and tryptophan to form 4-dimethylallyl-L-tryptophan. The second step is catalyzed by the methyltransferase easF that methylates 4-dimethylallyl-L-tryptophan in the presence of S-adenosyl-L-methionine, resulting in the formation of 4-dimethylallyl-L-abrine. The catalase easC and the FAD-dependent oxidoreductase easE then transform 4-dimethylallyl-L-abrine to chanoclavine-I which is further oxidized by easD in the presence of NAD(+), resulting in the formation of chanoclavine-I aldehyde. Agroclavine dehydrogenase easG then mediates the conversion of chanoclavine-I aldehyde to agroclavine via a non-enzymatic adduct reaction: the substrate is an iminium intermediate that is formed spontaneously from chanoclavine-I aldehyde in the presence of glutathione. The presence of easA is not required to complete this reaction. Further conversion of agroclavine to paspalic acid is a two-step process involving oxidation of agroclavine to elymoclavine and of elymoclavine to paspalic acid, the second step being performed by the elymoclavine oxidase cloA. Paspalic acid is then further converted to D-lysergic acid. Ergopeptines are assembled from D-lysergic acid and three different amino acids by the D-lysergyl-peptide-synthetases composed each of a monomudular and a trimodular nonribosomal peptide synthetase subunit. LpsB and lpsC encode the monomodular subunits responsible for D-lysergic acid activation and incorporation into the ergopeptine backbone. LpsA1 and A2 subunits encode the trimodular nonribosomal peptide synthetase assembling the tripeptide portion of ergopeptines. LpsA1 is responsible for formation of the major ergopeptine, ergotamine, and lpsA2 for alpha-ergocryptine, the minor ergopeptine of the total alkaloid mixture elaborated by C.purpurea. D-lysergyl-tripeptides are assembled by the nonribosomal peptide synthetases and released as N-(D-lysergyl-aminoacyl)-lactams. Cyclolization of the D-lysergyl-tripeptides is performed by the Fe(2+)/2-ketoglutarate-dependent dioxygenase easH which introduces a hydroxyl group into N-(D-lysergyl-aminoacyl)-lactam at alpha-C of the aminoacyl residue followed by spontaneous condensation with the terminal lactam carbonyl group. The sequence is that of D-lysergyl-peptide-synthetase subunit 1 from Claviceps purpurea (strain 20.1) (Ergot fungus).